Here is a 285-residue protein sequence, read N- to C-terminus: RNA polymerase sigma factor RpoH (285 aa).

The sigma-70 factor domain-2 stretch occupies residues 53–122 (LILSHLRFVA…IHEYVLRNWR (70 aa)). The Interaction with polymerase core subunit RpoC motif lies at 77–80 (DLIQ). The tract at residues 229 to 281 (ALEGLDERSQHIIRARWLDDDNKSTLQELADQYGVSAERVRQLEKNAMKKLKM) is sigma-70 factor domain-4. The H-T-H motif DNA-binding region spans 254-273 (LQELADQYGVSAERVRQLEK).

It belongs to the sigma-70 factor family. RpoH subfamily. Interacts with the RNA polymerase core enzyme.

It localises to the cytoplasm. In terms of biological role, sigma factors are initiation factors that promote the attachment of RNA polymerase to specific initiation sites and are then released. This sigma factor is involved in regulation of expression of heat shock genes. This chain is RNA polymerase sigma factor RpoH, found in Serratia marcescens.